A 91-amino-acid chain; its full sequence is Small ribosomal subunit protein bS20 (91 aa).

Over residues 1 to 18 the composition is skewed to basic and acidic residues; that stretch reads MPLHKSAEKRLRQSERRN. A disordered region spans residues 1–26; sequence MPLHKSAEKRLRQSERRNARNRSRKK.

The protein belongs to the bacterial ribosomal protein bS20 family.

In terms of biological role, binds directly to 16S ribosomal RNA. This is Small ribosomal subunit protein bS20 from Pelodictyon phaeoclathratiforme (strain DSM 5477 / BU-1).